Reading from the N-terminus, the 94-residue chain is Alpha-elapitoxin-Nss2a (94 aa).

The signal sequence occupies residues 1–21 (MKTLLLTLVVVTIVCLDLGDS). 5 cysteine pairs are disulfide-bonded: C24/C41, C34/C62, C47/C51, C66/C77, and C78/C83.

This sequence belongs to the three-finger toxin family. Long-chain subfamily. Type II alpha-neurotoxin sub-subfamily. Expressed by the venom gland.

The protein localises to the secreted. Its function is as follows. Binds with high affinity to muscular (alpha-1/CHRNA1) and neuronal (alpha-7/CHRNA7) nicotinic acetylcholine receptor (nAChR) and inhibits acetylcholine from binding to the receptor, thereby impairing neuromuscular and neuronal transmission. The polypeptide is Alpha-elapitoxin-Nss2a (Notechis scutatus scutatus (Mainland tiger snake)).